A 144-amino-acid polypeptide reads, in one-letter code: D-aminoacyl-tRNA deacylase (144 aa).

Positions 136 to 137 (GP) match the Gly-cisPro motif, important for rejection of L-amino acids motif.

This sequence belongs to the DTD family. In terms of assembly, homodimer.

It is found in the cytoplasm. The enzyme catalyses glycyl-tRNA(Ala) + H2O = tRNA(Ala) + glycine + H(+). The catalysed reaction is a D-aminoacyl-tRNA + H2O = a tRNA + a D-alpha-amino acid + H(+). An aminoacyl-tRNA editing enzyme that deacylates mischarged D-aminoacyl-tRNAs. Also deacylates mischarged glycyl-tRNA(Ala), protecting cells against glycine mischarging by AlaRS. Acts via tRNA-based rather than protein-based catalysis; rejects L-amino acids rather than detecting D-amino acids in the active site. By recycling D-aminoacyl-tRNA to D-amino acids and free tRNA molecules, this enzyme counteracts the toxicity associated with the formation of D-aminoacyl-tRNA entities in vivo and helps enforce protein L-homochirality. This is D-aminoacyl-tRNA deacylase from Actinobacillus succinogenes (strain ATCC 55618 / DSM 22257 / CCUG 43843 / 130Z).